A 342-amino-acid chain; its full sequence is Thiosulfate/3-mercaptopyruvate sulfurtransferase 2 (342 aa).

2 Rhodanese domains span residues 56-173 (GDAD…DVES) and 224-338 (EDKT…LPIV). Catalysis depends on Cys298, which acts as the Cysteine persulfide intermediate.

Expressed in roots, rosette and cauline leaves, stems, flowers and siliques.

It is found in the cytoplasm. The enzyme catalyses thiosulfate + hydrogen cyanide = thiocyanate + sulfite + 2 H(+). It catalyses the reaction 2-oxo-3-sulfanylpropanoate + [thioredoxin]-dithiol = [thioredoxin]-disulfide + hydrogen sulfide + pyruvate + H(+). Catalyzes the transfer of a sulfur ion from a donor to cyanide or to other thiol compounds. Substrate preference is 3-mercaptopyruvate &gt; thiosulfate. Involved in embryo and seed development. This is Thiosulfate/3-mercaptopyruvate sulfurtransferase 2 (STR2) from Arabidopsis thaliana (Mouse-ear cress).